A 402-amino-acid polypeptide reads, in one-letter code: Cysteine-rich venom protein (402 aa).

The first 13 residues, 1–13 (MNLALFIIFATIF), serve as a signal peptide directing secretion. An SCP domain is found at 57–199 (LETHNQLRNK…VKKVLYTCNY (143 aa)).

This sequence belongs to the CRISP family. Contains 7 disulfide bonds. Expressed by the venom gland.

It is found in the secreted. The sequence is that of Cysteine-rich venom protein from Tityus serrulatus (Brazilian scorpion).